The sequence spans 159 residues: Transcription antitermination protein NusB (159 aa).

This sequence belongs to the NusB family.

Its function is as follows. Involved in transcription antitermination. Required for transcription of ribosomal RNA (rRNA) genes. Binds specifically to the boxA antiterminator sequence of the ribosomal RNA (rrn) operons. The polypeptide is Transcription antitermination protein NusB (Xanthomonas campestris pv. campestris (strain 8004)).